The primary structure comprises 443 residues: tRNA-2-methylthio-N(6)-dimethylallyladenosine synthase (443 aa).

An MTTase N-terminal domain is found at M1–Q114. [4Fe-4S] cluster is bound by residues C10, C46, C79, C150, C154, and C157. Residues R136–K367 enclose the Radical SAM core domain. The TRAM domain maps to E370–W431.

Belongs to the methylthiotransferase family. MiaB subfamily. In terms of assembly, monomer. The cofactor is [4Fe-4S] cluster.

The protein localises to the cytoplasm. The enzyme catalyses N(6)-dimethylallyladenosine(37) in tRNA + (sulfur carrier)-SH + AH2 + 2 S-adenosyl-L-methionine = 2-methylsulfanyl-N(6)-dimethylallyladenosine(37) in tRNA + (sulfur carrier)-H + 5'-deoxyadenosine + L-methionine + A + S-adenosyl-L-homocysteine + 2 H(+). In terms of biological role, catalyzes the methylthiolation of N6-(dimethylallyl)adenosine (i(6)A), leading to the formation of 2-methylthio-N6-(dimethylallyl)adenosine (ms(2)i(6)A) at position 37 in tRNAs that read codons beginning with uridine. This is tRNA-2-methylthio-N(6)-dimethylallyladenosine synthase from Thermotoga sp. (strain RQ2).